A 273-amino-acid chain; its full sequence is Elongation factor Ts (273 aa).

Positions 80 to 83 are involved in Mg(2+) ion dislocation from EF-Tu; the sequence is TDFV.

The protein belongs to the EF-Ts family.

Its subcellular location is the cytoplasm. Associates with the EF-Tu.GDP complex and induces the exchange of GDP to GTP. It remains bound to the aminoacyl-tRNA.EF-Tu.GTP complex up to the GTP hydrolysis stage on the ribosome. This chain is Elongation factor Ts, found in Tropheryma whipplei (strain Twist) (Whipple's bacillus).